Here is a 582-residue protein sequence, read N- to C-terminus: Arginine--tRNA ligase (582 aa).

The 'HIGH' region motif lies at 127–137 (PNLAKEMHVGH).

The protein belongs to the class-I aminoacyl-tRNA synthetase family. In terms of assembly, monomer.

The protein localises to the cytoplasm. It catalyses the reaction tRNA(Arg) + L-arginine + ATP = L-arginyl-tRNA(Arg) + AMP + diphosphate. The polypeptide is Arginine--tRNA ligase (Psychromonas ingrahamii (strain DSM 17664 / CCUG 51855 / 37)).